We begin with the raw amino-acid sequence, 154 residues long: Deoxyuridine 5'-triphosphate nucleotidohydrolase (154 aa).

Substrate-binding positions include 72–74 (RSG), N85, 89–91 (LID), and M99.

This sequence belongs to the dUTPase family. Mg(2+) serves as cofactor.

It carries out the reaction dUTP + H2O = dUMP + diphosphate + H(+). It participates in pyrimidine metabolism; dUMP biosynthesis; dUMP from dCTP (dUTP route): step 2/2. Its function is as follows. This enzyme is involved in nucleotide metabolism: it produces dUMP, the immediate precursor of thymidine nucleotides and it decreases the intracellular concentration of dUTP so that uracil cannot be incorporated into DNA. This Psychrobacter arcticus (strain DSM 17307 / VKM B-2377 / 273-4) protein is Deoxyuridine 5'-triphosphate nucleotidohydrolase.